A 249-amino-acid chain; its full sequence is uncharacterized protein (249 aa).

It localises to the cytoplasm. The protein localises to the nucleus. This is an uncharacterized protein from Schizosaccharomyces pombe (strain 972 / ATCC 24843) (Fission yeast).